Reading from the N-terminus, the 115-residue chain is UPF0102 protein Kole_1919 (115 aa).

Belongs to the UPF0102 family.

This Kosmotoga olearia (strain ATCC BAA-1733 / DSM 21960 / TBF 19.5.1) protein is UPF0102 protein Kole_1919.